The chain runs to 350 residues: GTPase Obg (350 aa).

The Obg domain maps to 1–159 (MKFIDEAKIT…WELALELKVL (159 aa)). Residues 17-43 (GDGSASFRREKYIPKGGPDGGDGGRGG) form a disordered region. The segment covering 33-43 (GPDGGDGGRGG) has biased composition (gly residues). Residues 160 to 334 (ADVGLLGMPN…LTYAVMDYLG (175 aa)) enclose the OBG-type G domain. Residues 166–173 (GMPNAGKS), 191–195 (FTTLA), 213–216 (DIPG), 284–287 (NKLD), and 315–317 (SAL) each bind GTP. Mg(2+) contacts are provided by S173 and T193.

This sequence belongs to the TRAFAC class OBG-HflX-like GTPase superfamily. OBG GTPase family. As to quaternary structure, monomer. Mg(2+) serves as cofactor.

It localises to the cytoplasm. An essential GTPase which binds GTP, GDP and possibly (p)ppGpp with moderate affinity, with high nucleotide exchange rates and a fairly low GTP hydrolysis rate. Plays a role in control of the cell cycle, stress response, ribosome biogenesis and in those bacteria that undergo differentiation, in morphogenesis control. This Thiobacillus denitrificans (strain ATCC 25259 / T1) protein is GTPase Obg.